A 320-amino-acid polypeptide reads, in one-letter code: MPPRLPGPQGLRSLTLCLRPAVASPAQALQPLIQTANISQKEKKRKMKQDPYGWAQAQQRKAVNVKRQAELQAQRDAAWGDPVKGITTPFVESFDSAGQASVSPPKVGPDGQLVEEPKPLPTSPHLRNYLLNKDEFDSAIQYAEHILKPIKAEDRLTADPEKEDEEAREHAARHAKAVAALERIAKLEHGGAKDRKHANIRRCIETFGRHITDQSLERPTPPLARGVEPKPQPVRAGPDTGSSEVQIAILTSKIRALSKALEGHGGNRDKNNKRSLRRLCHKRQRLLRYMERKERGSGRWHHMLETLGLTPATWKGQITL.

Disordered stretches follow at residues 37 to 60 and 214 to 242; these read NISQ…AQQR and QSLE…DTGS.

The protein belongs to the universal ribosomal protein uS15 family. Component of the mitochondrial small ribosomal subunit (mt-SSU). Mature N.crassa 74S mitochondrial ribosomes consist of a small (37S) and a large (54S) subunit. The 37S small subunit contains a 16S ribosomal RNA (16S mt-rRNA) and 32 different proteins. The 54S large subunit contains a 23S rRNA (23S mt-rRNA) and 42 different proteins.

It localises to the mitochondrion. Its function is as follows. Component of the mitochondrial ribosome (mitoribosome), a dedicated translation machinery responsible for the synthesis of mitochondrial genome-encoded proteins, including at least some of the essential transmembrane subunits of the mitochondrial respiratory chain. The mitoribosomes are attached to the mitochondrial inner membrane and translation products are cotranslationally integrated into the membrane. The protein is Small ribosomal subunit protein uS15m (mrps28) of Neurospora crassa (strain ATCC 24698 / 74-OR23-1A / CBS 708.71 / DSM 1257 / FGSC 987).